The primary structure comprises 330 residues: Peroxidase 42 (330 aa).

The N-terminal stretch at 1 to 23 is a signal peptide; that stretch reads MGGKGVMMVAILCLWALSATSEA. Cystine bridges form between cysteine 40–cysteine 119, cysteine 73–cysteine 78, cysteine 125–cysteine 323, and cysteine 204–cysteine 231. Histidine 71 functions as the Proton acceptor in the catalytic mechanism. Ca(2+)-binding residues include aspartate 72, valine 75, aspartate 79, and serine 81. Position 167 (proline 167) interacts with substrate. Asparagine 170 carries N-linked (GlcNAc...) asparagine glycosylation. Histidine 197 contacts heme b. A Ca(2+)-binding site is contributed by serine 198. Ca(2+) contacts are provided by aspartate 247, threonine 250, and aspartate 255.

The protein belongs to the peroxidase family. Classical plant (class III) peroxidase subfamily. The cofactor is heme b. Ca(2+) is required as a cofactor. Constitutively expressed in the whole plant, with the highest expression in roots.

It localises to the secreted. It catalyses the reaction 2 a phenolic donor + H2O2 = 2 a phenolic radical donor + 2 H2O. Functionally, removal of H(2)O(2), oxidation of toxic reductants, biosynthesis and degradation of lignin, suberization, auxin catabolism, response to environmental stresses such as wounding, pathogen attack and oxidative stress. These functions might be dependent on each isozyme/isoform in each plant tissue. Its function is as follows. Might function as heat shock-like defense protein. This Arabidopsis thaliana (Mouse-ear cress) protein is Peroxidase 42 (PER42).